Consider the following 717-residue polypeptide: Polyribonucleotide nucleotidyltransferase (717 aa).

Positions 487 and 493 each coordinate Mg(2+). Residues 554 to 613 (PKIITMAINPDKIRDVIGPSGKQINKIIEETGVKIDIEQDGTVFISSINQEMNEKAKKII) form the KH domain. Positions 623–691 (GEIYLGKVKR…KQGRVNLSRK (69 aa)) constitute an S1 motif domain.

It belongs to the polyribonucleotide nucleotidyltransferase family. It depends on Mg(2+) as a cofactor.

Its subcellular location is the cytoplasm. It carries out the reaction RNA(n+1) + phosphate = RNA(n) + a ribonucleoside 5'-diphosphate. Involved in mRNA degradation. Catalyzes the phosphorolysis of single-stranded polyribonucleotides processively in the 3'- to 5'-direction. The polypeptide is Polyribonucleotide nucleotidyltransferase (Bacillus mycoides (strain KBAB4) (Bacillus weihenstephanensis)).